The sequence spans 2279 residues: Zinc finger protein 318 (2279 aa).

2 stretches are compositionally biased toward low complexity: residues 1–12 and 25–39; these read MYRSSARSSVSS and SGRS…ARRS. 2 disordered regions span residues 1 to 140 and 164 to 189; these read MYRS…PGLC and RRRL…LTDD. The interaction with AR stretch occupies residues 1-1092; that stretch reads MYRSSARSSV…THMHNKKHTQ (1092 aa). Serine 40 is modified (phosphoserine). The segment covering 53–67 has biased composition (basic residues); it reads PARRPRSPSGHRGRR. Phosphoserine occurs at positions 79 and 81. The span at 110-132 shows a compositional bias: basic and acidic residues; it reads SRGESRADYARDGRGDHPGDSGS. Residues serine 136 and serine 173 each carry the phosphoserine modification. Acidic residues predominate over residues 177–188; sequence NLEDMDRDDLTD. Tyrosine 205 bears the Phosphotyrosine mark. A phosphoserine mark is found at serine 207 and serine 214. Disordered regions lie at residues 279–346 and 397–416; these read TVKI…DGGG and LESF…YSGH. Residues 311 to 333 are compositionally biased toward basic and acidic residues; sequence LDPEFRELDLARRKREEEEERSR. The stretch at 315–343 forms a coiled coil; that stretch reads FRELDLARRKREEEEERSRSLSQELVGVD. Residues serine 464, serine 472, serine 501, and serine 527 each carry the phosphoserine modification. Disordered stretches follow at residues 514 to 533 and 540 to 570; these read LADS…DIED and GDEE…ASSL. Glycyl lysine isopeptide (Lys-Gly) (interchain with G-Cter in SUMO2) cross-links involve residues lysine 547, lysine 553, lysine 566, and lysine 578. Residues 664-683 show a composition bias toward basic and acidic residues; sequence FSADRRSSDPHRLESREAHH. A disordered region spans residues 664–709; that stretch reads FSADRRSSDPHRLESREAHHSNTHSPEVSHPHPPSPVDPYLLTKNS. The residue at position 842 (threonine 842) is a Phosphothreonine. Residues 876 to 980 adopt a coiled-coil conformation; that stretch reads EKISDEKNRA…SELDKVAQIL (105 aa). Basic and acidic residues-rich tracts occupy residues 922–941 and 989–1012; these read QQGE…KDPL and QKSL…KSPE. Disordered regions lie at residues 922 to 942 and 989 to 1051; these read QQGE…DPLL and QKSL…TKQL. Residue serine 1010 is modified to Phosphoserine. Low complexity predominate over residues 1013-1023; that stretch reads KVSSFSNSSSN. Residues 1024–1034 are compositionally biased toward basic and acidic residues; that stretch reads KESKVNNEKFR. Serine 1037 bears the Phosphoserine mark. Matrin-type zinc fingers lie at residues 1063-1097 and 1136-1166; these read AGNH…LDPY and FYCQ…KYKK. Basic and acidic residues-rich tracts occupy residues 1195–1235, 1242–1251, 1258–1267, 1279–1288, and 1296–1316; these read RRQS…KLED, NSPEKAENKR, QLKEEVKKES, KKPEKEEEKS, and SKEE…EAGK. Positions 1195-1319 are disordered; that stretch reads RRQSELKRKL…GKTEAGKAKP (125 aa). 2 positions are modified to phosphoserine: serine 1243 and serine 1267. The residue at position 1420 (serine 1420) is a Phosphoserine. Disordered stretches follow at residues 1428–1463, 1577–1628, 1702–1735, and 1753–1775; these read AEKS…HPAA, GKGA…EELH, SSFQ…PPQL, and ESVN…ESEI. The span at 1440–1462 shows a compositional bias: pro residues; sequence ILPPPPPPPPPPPPPPPVIPHPA. Over residues 1602-1623 the composition is skewed to low complexity; that stretch reads SNLSRTKSSDTSSTSPLNSSAS. The segment covering 1708–1719 has biased composition (basic and acidic residues); sequence TSRDISPEKSEL. A Phosphoserine modification is found at serine 1713. Positions 1724 to 1734 are enriched in pro residues; it reads PGPPGVEPPPQ. A coiled-coil region spans residues 1768 to 1792; sequence EDCRESEIETNTELKERVKELSEGI. 10 positions are modified to phosphoserine: serine 1856, serine 1896, serine 1971, serine 2030, serine 2035, serine 2091, serine 2101, serine 2189, serine 2192, and serine 2243. The segment at 2252–2279 is disordered; the sequence is DNMVPQGMPEQETTVGAIQDHTESSVHN.

As to quaternary structure, homodimer. Heterodimer of isoform 1 and isoform 2. Isoform 1 and isoform 2 interact with AR. As to expression, expressed in endocrine tissue.

It is found in the nucleus. In terms of biological role, acts as a transcriptional corepressor for AR-mediated transactivation function. May act as a transcriptional regulator during spermatogenesis and, in particular, during meiotic division. Its function is as follows. Acts as a transcriptional coactivator for AR-mediated transactivation function. May act as a transcriptional regulator during spermatogenesis and, in particular, during meiotic division. The polypeptide is Zinc finger protein 318 (ZNF318) (Homo sapiens (Human)).